A 602-amino-acid chain; its full sequence is Leucine-rich repeat-containing protein 40 (602 aa).

A disordered region spans residues 1-20; that stretch reads MSRLKRIAGQDPRAGFKAAG. Phosphoserine is present on S71. LRR repeat units follow at residues 83–104, 106–127, 129–150, 152–173, 175–196, 198–219, 221–242, 244–265, 266–286, 290–311, 313–335, 336–356, 400–421, 426–447, 450–471, 473–494, 496–517, 519–540, 543–564, and 566–586; these read DLTKLIISNNKLQSLTDDLRLL, ALTVLDIHDNQLTSLPSAMREL, NLQKLNVSHNKLKIFPEEITNL, NLKCLYLQHNELTCISEGFEQL, NLEDLDLSNNRLTTVPASFSSL, SLVRLNLSSNQLKSLPAEINRM, RLKHLDCNSNLLETIPPELAGM, SLELLYLRRNKLRFLPEFPSCS, LLKELHVGENQIEMLEAEHLK, SILVLDLRDNKLKSVPDEIILL, SLERLDLSNNDISSLPYSLGNLH, LKFLALEGNPLRTIRREIINK, TLKILDYSDKQATLIPDEVFNA, IITSINFSKNQLCEIPKRMVEL, MVSDVNLSFNKLSFISLELCML, KLTFLDLRNNFLNSLPEEMESL, RLQTINLSFNRFKMLPEVLYRI, TLETILISNNQVGSVDPQKMKM, NLTTLDLQNNDLLQIPPELGNC, and NLRTLLLDGNPFRVPRAAILI.

This Macaca fascicularis (Crab-eating macaque) protein is Leucine-rich repeat-containing protein 40 (LRRC40).